The chain runs to 361 residues: MGGAVSAGEDNDELIDNLKEAQYIRTELVEQAFRAIDRADYYLEEFKENAYKDLAWKHGNIHLSAPCIYSEVMEALDLQPGLSFLNLGSGTGYLSSMVGLILGPFGVNHGVELHSDVIEYAKQKLDFFIRTSDSFDKFDFCEPSFVTGNCLEISPDCSQYDRVYCGAGVQKEHEEYMKNLLKVGGILVMPLEEKLTKITRTGPSAWETKKILAVSFAPLIQPCHSESGKSRLVQLPPVAVRSLQDLARIAIRGTIKKIIHQETVSKNGNGLKNTPRFKRRRVRRRRMETIVFLDKEVFASRISNPSDDNSCEDLEEERREEEEKTPPETKPDPPVNFLRQKVLSLPLPDPLKYYLLYYREK.

The N-myristoyl glycine moiety is linked to residue Gly2. Residue Ser64 is part of the active site. AdoMet binding motif regions lie at residues 85–94 (LNLGSGTGYL), 160–164 (YDRVY), and 181–191 (LKVGGILVMPL). The tract at residues 240 to 250 (VRSLQDLARIA) is BC-box. Positions 303–336 (SNPSDDNSCEDLEEERREEEEKTPPETKPDPPVN) are disordered. Residues 309–320 (NSCEDLEEERRE) show a composition bias toward acidic residues. A compositionally biased stretch (basic and acidic residues) spans 321-331 (EEEKTPPETKP). Residues 345-348 (LPLP) are CUL-box.

Belongs to the methyltransferase superfamily. L-isoaspartyl/D-aspartyl protein methyltransferase family.

It localises to the cytoplasm. In terms of biological role, may act as a substrate recognition component of an ECS (Elongin BC-CUL5-SOCS-box protein) E3 ubiquitin ligase complex which mediates the ubiquitination and subsequent proteasomal degradation of target proteins. May bind to the methyltransferase cofactor S-adenosylmethionine (AdoMet) via the N-terminal AdoMet binding motif, but probably does not display methyltransferase activity. This chain is Protein-L-isoaspartate O-methyltransferase domain-containing protein 2 (PCMTD2), found in Homo sapiens (Human).